The sequence spans 182 residues: Thioredoxin F-type, chloroplastic (182 aa).

A chloroplast-targeting transit peptide spans 1 to 69 (MALNLCTSPK…SVRSSLETAG (69 aa)). The Thioredoxin domain maps to 70–181 (PTVTVGKVTE…LVAAIDTVRS (112 aa)). Catalysis depends on nucleophile residues cysteine 106 and cysteine 109. An intrachain disulfide couples cysteine 106 to cysteine 109.

It belongs to the thioredoxin family. Plant F-type subfamily. Forms a complex with heterodimeric ferredoxin-thioredoxin reductase (FTR) and ferredoxin.

It is found in the plastid. The protein localises to the chloroplast. Functionally, participates in various redox reactions through the reversible oxidation of the active center dithiol to a disulfide. The F form is known to activate a number of enzymes of the photosynthetic carbon cycle. In Pisum sativum (Garden pea), this protein is Thioredoxin F-type, chloroplastic.